The sequence spans 2090 residues: Nuclear pore complex protein Nup214 (2090 aa).

Gly2 bears the N-acetylglycine mark. Ser30 bears the Phosphoserine mark. 7 Blade repeats span residues 41-93 (LLAV…PMKF), 94-150 (PIHH…DAGG), 151-193 (MVID…PSTV), 194-239 (AVTS…ESDH), 240-303 (PVRV…ERQH), 304-359 (HYYL…KSDD), and 360-404 (SLPM…FYMI). Positions 41-404 (LLAVSNKYGL…DGVLCPFYMI (364 aa)) are seven-bladed beta propeller. The segment at 236–1418 (ESDHPVRVLD…AVFGSLPVTS (1183 aa)) is 44 X 2 AA repeats of F-G. Thr416 bears the Phosphothreonine mark. A phosphoserine mark is found at Ser421, Ser430, and Ser433. The segment at 422–460 (LEGERQPKSPGSTPTTPTSSQAPQKLDASAAAAPASLPP) is disordered. Residues 429-441 (KSPGSTPTTPTSS) are compositionally biased toward low complexity. Phosphothreonine occurs at positions 434, 437, and 439. Residues 450–586 (SAAAAPASLP…PPSTSAVKVN (137 aa)) are (Microbial infection) Binds human adenovirus 5 (HAdV-5) protein L3 (hexon). Residues 481–2076 (VFSFGSSSLK…GSGTGGFSFG (1596 aa)) form an 11 X 5 AA approximate repeats region. Repeat 1 spans residues 484 to 485 (FG). Low complexity-rich tracts occupy residues 489-513 (LKSS…KAAP) and 524-536 (PPSK…TPAA). The tract at residues 489–536 (LKSSATVTGEPPSYSSGSDSSKAAPGPGPSTFSFVPPSKASLAPTPAA) is disordered. Copy 2 of the repeat occupies 548 to 549 (FG). 2 stretches are compositionally biased toward low complexity: residues 597-629 (STPV…HPTP) and 637-658 (VPLK…SSSP). The segment at 597–700 (STPVSSSQSA…KQGHQWKDSD (104 aa)) is disordered. Phosphoserine is present on residues Ser651, Ser657, and Ser666. At Thr670 the chain carries Phosphothreonine. Phosphoserine is present on Ser678. Residues 680 to 1209 (QAKSLQPAVA…VTSTPSASGQ (530 aa)) are a coiled coil. The segment covering 691-700 (KQGHQWKDSD) has biased composition (basic and acidic residues). Leucine-zipper regions lie at residues 740-768 (LRTE…ISSL) and 861-882 (LANN…VDSL). Ser760 carries the phosphoserine modification. Phosphoserine is present on residues Ser940, Ser970, Ser974, and Ser989. The interval 987–1009 (TSSVSQSLESEDARTSCKDDEAV) is disordered. Positions 997–1007 (EDARTSCKDDE) are enriched in basic and acidic residues. Thr1021 is subject to Phosphothreonine. Residues Ser1023, Ser1045, Ser1056, and Ser1081 each carry the phosphoserine modification. Over residues 1128–1149 (LKNNPATPSTAMGSSVPYSTAK) the composition is skewed to polar residues. Positions 1128–1152 (LKNNPATPSTAMGSSVPYSTAKTPH) are disordered. 3 positions are modified to phosphothreonine: Thr1134, Thr1150, and Thr1156. Polar residues-rich tracts occupy residues 1168-1188 (LINS…SSGD) and 1199-1213 (AVTS…FSKP). The interval 1168–1213 (LINSLKPSGPTPASGQLSSGDKASGTAKIETAVTSTPSASGQFSKP) is disordered. Ser1181 carries the phosphoserine modification. The stretch at 1225–1226 (FG) is repeat 3. Composition is skewed to polar residues over residues 1234-1254 (SNFT…QPDA) and 1273-1285 (PPSG…NTTP). 2 disordered regions span residues 1234–1316 (SNFT…PPSK) and 1337–1408 (LRVG…TSST). A compositionally biased stretch (low complexity) spans 1288-1299 (PAASSSRPVAPS). The span at 1301–1310 (TALSTTSSKL) shows a compositional bias: polar residues. Thr1312 carries the phosphothreonine modification. Polar residues predominate over residues 1347–1368 (KPTNKASSTSLTSTQPTKTSGV). At Ser1353 the chain carries Phosphoserine. The span at 1386-1408 (PPVTSSATTTSVAPPAATSTSST) shows a compositional bias: low complexity. The tract at residues 1409–2084 (AVFGSLPVTS…FGSNNSSVQG (676 aa)) is 18 X 4 AA approximate repeats. 4 repeat units span residues 1411–1412 (FG), 1427–1428 (FG), 1441–1442 (FG), and 1473–1474 (FG). The tract at residues 1427 to 2085 (FGGTSLSAGK…GSNNSSVQGF (659 aa)) is 11 X 3 AA approximate repeats. Over residues 1438–1450 (SFSFGSQQTNSTV) the composition is skewed to polar residues. The interval 1438-1467 (SFSFGSQQTNSTVPPSAPPPTTAATPLPTS) is disordered. Composition is skewed to low complexity over residues 1479–1489 (SATTPSLPMSA) and 1508–1527 (SEVS…AQLP). A disordered region spans residues 1479 to 1539 (SATTPSLPMS…PPQTSDSVKK (61 aa)). Residue Lys1538 forms a Glycyl lysine isopeptide (Lys-Gly) (interchain with G-Cter in SUMO2) linkage. 18 tandem repeats follow at residues 1635–1636 (FG), 1674–1675 (FG), 1686–1687 (FG), 1713–1714 (FG), 1721–1722 (FG), 1726–1727 (FG), 1732–1733 (FG), 1756–1757 (FG), 1772–1773 (FG), 1786–1787 (FG), 1798–1799 (FG), 1806–1807 (FG), 1812–1813 (FG), 1819–1820 (FG), 1842–1843 (FG), 1851–1852 (FG), 1862–1863 (FG), and 1874–1875 (FG). Residues 1884–1903 (GFFSGLGGKPSQDAANKNPF) are disordered. 5 consecutive repeat copies span residues 1910–1911 (FG), 1922–1923 (FG), 1930–1931 (FG), 1938–1939 (FG), and 1959–1960 (FG). Ser1963 carries the post-translational modification Phosphoserine. 3 repeat units span residues 1970-1971 (FG), 1976-1977 (FG), and 1982-1983 (FG). Phosphoserine is present on Ser1985. 11 tandem repeats follow at residues 1988-1989 (FG), 1994-1995 (FG), 2012-2013 (FG), 2024-2025 (FG), 2026-2027 (FG), 2035-2036 (FG), 2046-2047 (FG), 2056-2057 (FG), 2066-2067 (FG), 2075-2076 (FG), and 2085-2086 (FG).

Homodimer. Part of the nuclear pore complex (NPC). Interacts with NUP88. Interacts with ZFP36; this interaction increases upon lipopolysaccharide (LPS) stimulation. Interacts with DDX19. Interacts with XPO1. Interacts with XPO5. As to quaternary structure, (Microbial infection) Interacts with human herpes virus 1 (HHV-1) protein UL25; this interaction might be essential to the capsid docking onto the host nuclear pore. In terms of assembly, (Microbial infection) Interacts (via N-terminus) with human adenovirus 5 (HAdV-5) protein L3 (hexon); this interaction might be essential for the release of the virus genome to the nucleus. Probably glycosylated as it reacts with wheat germ agglutinin (WGA). Expressed in thymus, spleen, bone marrow, kidney, brain and testis, but hardly in all other tissues or in whole embryos during development.

Its subcellular location is the nucleus. The protein localises to the nuclear pore complex. Functionally, part of the nuclear pore complex. Has a critical role in nucleocytoplasmic transport. May serve as a docking site in the receptor-mediated import of substrates across the nuclear pore complex. In terms of biological role, (Microbial infection) Required for capsid disassembly of the human adenovirus 5 (HadV-5) leading to release of the viral genome to the nucleus (in vitro). This is Nuclear pore complex protein Nup214 (NUP214) from Homo sapiens (Human).